A 944-amino-acid polypeptide reads, in one-letter code: Protocadherin gamma-C5 (944 aa).

The first 29 residues, 1-29 (MGPKTLPQLAGKWQVLCMLSLCCWGWVSG), serve as a signal peptide directing secretion. Cadherin domains follow at residues 30–133 (QLRY…SPSF), 134–242 (ATPE…APTF), 243–350 (QSSV…APEV), 351–454 (LLAS…APRF), 455–564 (NQQL…APAV), and 571–677 (WEHS…MPKS). The Extracellular portion of the chain corresponds to 30–693 (QLRYSVVEES…PPERSDLTLY (664 aa)). 3 N-linked (GlcNAc...) asparagine glycosylation sites follow: asparagine 265, asparagine 443, and asparagine 547. The helical transmembrane segment at 694–714 (LIVALATVSLLSLVTFTFLSA) threads the bilayer. The Cytoplasmic segment spans residues 715–944 (KCLQGNADGD…KKKSGKKEKK (230 aa)). Disordered regions lie at residues 722–747 (DGDGGGGQCCRRQDSPSPDFYKQSSP), 812–853 (SNTL…WPNN), and 914–944 (ATLTNAAGKRDGKAPAGGNGNKKKSGKKEKK). Over residues 820-853 (QQAPPNTDWRFSQAQRPGTSGSQNGDDTGTWPNN) the composition is skewed to polar residues. Residues 934–944 (NKKKSGKKEKK) show a composition bias toward basic residues.

It localises to the cell membrane. Its function is as follows. Potential calcium-dependent cell-adhesion protein. May be involved in the establishment and maintenance of specific neuronal connections in the brain. The chain is Protocadherin gamma-C5 (PCDHGC5) from Homo sapiens (Human).